The chain runs to 249 residues: DNA repair protein RecO (249 aa).

This sequence belongs to the RecO family.

In terms of biological role, involved in DNA repair and RecF pathway recombination. The protein is DNA repair protein RecO of Polaromonas sp. (strain JS666 / ATCC BAA-500).